The chain runs to 287 residues: NADH-cytochrome b5 reductase 1 (287 aa).

Residues 5–25 (FEALVTALVLAVSFIFIYGKF) traverse the membrane as a helical segment. Residues 41 to 145 (KDWQEFSLLT…RGPKGFYHYE (105 aa)) enclose the FAD-binding FR-type domain. FAD is bound by residues 125 to 142 (AELAIGDRIKVRGPKGFY) and 151 to 183 (EIGMIAGGTGISPMYQIIRAIFSNPRDKTRVCL).

The protein belongs to the flavoprotein pyridine nucleotide cytochrome reductase family. In terms of assembly, monomer. Component of the 2-(3-amino-3-carboxypropyl)histidine synthase complex composed of DPH1, DPH2, DPH3 and a NADH-dependent reductase, predominantly CBR1. The cofactor is FAD.

It is found in the mitochondrion outer membrane. It carries out the reaction 2 Fe(III)-[cytochrome b5] + NADH = 2 Fe(II)-[cytochrome b5] + NAD(+) + H(+). The catalysed reaction is 2 Fe(3+)-[Dph3] + NADH = 2 Fe(2+)-[Dph3] + NAD(+) + H(+). It participates in protein modification; peptidyl-diphthamide biosynthesis. Its function is as follows. NADH-dependent reductase for DPH3 and cytochrome b5. Required for the first step of diphthamide biosynthesis, a post-translational modification of histidine which occurs in elongation factor 2. DPH1 and DPH2 transfer a 3-amino-3-carboxypropyl (ACP) group from S-adenosyl-L-methionine (SAM) to a histidine residue, the reaction is assisted by a reduction system comprising DPH3 and a NADH-dependent reductase, predominantly CBR1. By reducing DPH3, also involved in the formation of the tRNA wobble base modification mcm5s 2U (5-methoxycarbonylmethyl-2-thiouridine), mediated by the elongator complex. The cytochrome b5/NADH cytochrome b5 reductase electron transfer system supports the catalytic activity of several sterol biosynthetic enzymes. The chain is NADH-cytochrome b5 reductase 1 (CBR1) from Eremothecium gossypii (strain ATCC 10895 / CBS 109.51 / FGSC 9923 / NRRL Y-1056) (Yeast).